The primary structure comprises 456 residues: Phosphomethylpyrimidine synthase (456 aa).

Substrate-binding positions include N80, M109, Y139, H175, 195-197 (SRG), 236-239 (DSLR), and E275. H279 provides a ligand contact to Zn(2+). Substrate is bound at residue Y302. H343 contacts Zn(2+). C423, C426, and C431 together coordinate [4Fe-4S] cluster.

It belongs to the ThiC family. [4Fe-4S] cluster serves as cofactor.

The catalysed reaction is 5-amino-1-(5-phospho-beta-D-ribosyl)imidazole + S-adenosyl-L-methionine = 4-amino-2-methyl-5-(phosphooxymethyl)pyrimidine + CO + 5'-deoxyadenosine + formate + L-methionine + 3 H(+). The protein operates within cofactor biosynthesis; thiamine diphosphate biosynthesis. In terms of biological role, catalyzes the synthesis of the hydroxymethylpyrimidine phosphate (HMP-P) moiety of thiamine from aminoimidazole ribotide (AIR) in a radical S-adenosyl-L-methionine (SAM)-dependent reaction. In Prochlorococcus marinus (strain MIT 9215), this protein is Phosphomethylpyrimidine synthase.